The chain runs to 31 residues: Cytochrome b6-f complex subunit 6 (31 aa).

Residues 4–24 (LTSYFGFLLAALTITLALFIG) traverse the membrane as a helical segment.

It belongs to the PetL family. As to quaternary structure, the 4 large subunits of the cytochrome b6-f complex are cytochrome b6, subunit IV (17 kDa polypeptide, PetD), cytochrome f and the Rieske protein, while the 4 small subunits are PetG, PetL, PetM and PetN. The complex functions as a dimer.

It localises to the plastid. Its subcellular location is the chloroplast thylakoid membrane. Component of the cytochrome b6-f complex, which mediates electron transfer between photosystem II (PSII) and photosystem I (PSI), cyclic electron flow around PSI, and state transitions. PetL is important for photoautotrophic growth as well as for electron transfer efficiency and stability of the cytochrome b6-f complex. The chain is Cytochrome b6-f complex subunit 6 from Triticum aestivum (Wheat).